The chain runs to 122 residues: uncharacterized protein (122 aa).

Residues 1 to 10 show a composition bias toward polar residues; it reads MGTGLRSQSL. The tract at residues 1–68 is disordered; that stretch reads MGTGLRSQSL…GQEWLPGSLG (68 aa). Basic and acidic residues predominate over residues 40-56; that stretch reads QGREKSRSSDGGPERLD.

This is an uncharacterized protein from Bos taurus (Bovine).